The primary structure comprises 200 residues: Probable GTP-binding protein EngB (200 aa).

In terms of domain architecture, EngB-type G spans 26–200 (SIPEIAIAGR…IYEIAQCIKK (175 aa)). GTP contacts are provided by residues 34-41 (GRSNVGKS), 61-65 (GCTKQ), 80-83 (DLPG), 147-150 (TKID), and 179-181 (TSS). Residues Ser41 and Thr63 each contribute to the Mg(2+) site.

The protein belongs to the TRAFAC class TrmE-Era-EngA-EngB-Septin-like GTPase superfamily. EngB GTPase family. The cofactor is Mg(2+).

Its function is as follows. Necessary for normal cell division and for the maintenance of normal septation. The chain is Probable GTP-binding protein EngB from Ehrlichia chaffeensis (strain ATCC CRL-10679 / Arkansas).